We begin with the raw amino-acid sequence, 248 residues long: Probable cyclic nucleotide phosphodiesterase CBUA0032 (248 aa).

The Fe cation site is built by aspartate 13, histidine 15, aspartate 52, asparagine 82, histidine 152, histidine 191, and histidine 193. AMP is bound by residues histidine 15, aspartate 52, and 82 to 83 (NH). Histidine 193 contacts AMP.

This sequence belongs to the cyclic nucleotide phosphodiesterase class-III family. It depends on Fe(2+) as a cofactor.

In Coxiella burnetii (strain RSA 493 / Nine Mile phase I), this protein is Probable cyclic nucleotide phosphodiesterase CBUA0032.